Consider the following 316-residue polypeptide: Pantothenate kinase (316 aa).

95–102 is an ATP binding site; sequence GSVAVGKS.

Belongs to the prokaryotic pantothenate kinase family.

It is found in the cytoplasm. It catalyses the reaction (R)-pantothenate + ATP = (R)-4'-phosphopantothenate + ADP + H(+). It functions in the pathway cofactor biosynthesis; coenzyme A biosynthesis; CoA from (R)-pantothenate: step 1/5. The sequence is that of Pantothenate kinase from Salmonella gallinarum (strain 287/91 / NCTC 13346).